We begin with the raw amino-acid sequence, 100 residues long: NADH-quinone oxidoreductase subunit K (100 aa).

3 consecutive transmembrane segments (helical) span residues 4 to 24 (LQHGLILAAILFVLGLTGLVI), 28 to 48 (LLFMLIGLEIMINASALAFVV), and 60 to 80 (VMYILAISLAAAEASIGLALL).

It belongs to the complex I subunit 4L family. As to quaternary structure, NDH-1 is composed of 13 different subunits. Subunits NuoA, H, J, K, L, M, N constitute the membrane sector of the complex.

It localises to the cell inner membrane. It catalyses the reaction a quinone + NADH + 5 H(+)(in) = a quinol + NAD(+) + 4 H(+)(out). Its function is as follows. NDH-1 shuttles electrons from NADH, via FMN and iron-sulfur (Fe-S) centers, to quinones in the respiratory chain. The immediate electron acceptor for the enzyme in this species is believed to be ubiquinone. Couples the redox reaction to proton translocation (for every two electrons transferred, four hydrogen ions are translocated across the cytoplasmic membrane), and thus conserves the redox energy in a proton gradient. The polypeptide is NADH-quinone oxidoreductase subunit K (Citrobacter koseri (strain ATCC BAA-895 / CDC 4225-83 / SGSC4696)).